Here is an 88-residue protein sequence, read N- to C-terminus: Mitochondrial import inner membrane translocase subunit Tim10 (88 aa).

The Twin CX3C motif motif lies at 25-49; the sequence is CSAKCISKYNEGDLNVGESVCAERC. 2 disulfide bridges follow: Cys25/Cys49 and Cys29/Cys45. The disordered stretch occupies residues 63–88; it reads KMSGTQPGQEVPQEAPAAAPEKKGWF. A compositionally biased stretch (low complexity) spans 68–81; the sequence is QPGQEVPQEAPAAA.

Belongs to the small Tim family. In terms of assembly, heterohexamer; composed of 3 copies of timm9 and 3 copies of timm10, named soluble 70 kDa complex. Associates directly with the TIM22 complex, whose core is composed of timm22. Interacts with the transmembrane regions of multi-pass transmembrane proteins in transit.

The protein resides in the mitochondrion inner membrane. Its function is as follows. Component of the TIM22 complex, a complex that mediates the import and insertion of multi-pass transmembrane proteins into the mitochondrial inner membrane. The TIM22 complex forms a twin-pore translocase that uses the membrane potential as external driving force. The sequence is that of Mitochondrial import inner membrane translocase subunit Tim10 (timm10) from Dictyostelium discoideum (Social amoeba).